Here is a 1176-residue protein sequence, read N- to C-terminus: Carbamoyl phosphate synthase arginine-specific large chain (1176 aa).

A mitochondrion-targeting transit peptide spans 1-11 (MLRSISIASRA). The interval 70–465 (SRSPDVKKVL…SLQKAIRQVD (396 aa)) is carboxyphosphate synthetic domain. Residues R197, R237, G243, G244, K273, L275, E280, G306, T307, H308, Q348, and E362 each coordinate ATP. Residues 201–391 (VQALNEIDIP…LAYTAAKIAL (191 aa)) enclose the ATP-grasp 1 domain. Mg(2+) is bound by residues Q348, E362, and N364. The Mn(2+) site is built by Q348, E362, and N364. Positions 466–610 (PNFAGFEAYW…YTSYNATTHD (145 aa)) are oligomerization domain. Residues 611–997 (VKFDNGTMVL…AYWAALLSVN (387 aa)) form a carbamoyl phosphate synthetic domain region. In terms of domain architecture, ATP-grasp 2 spans 734–931 (SSILDSIGVD…FIDTASAAIM (198 aa)). ATP contacts are provided by R770, Q809, I811, E816, G841, V842, H843, S844, Q884, and E902. The Mg(2+) site is built by Q884, E902, and N904. 3 residues coordinate Mn(2+): Q884, E902, and N904. Residues 998–1137 (GMKLPKANSG…NPIPYSEGFK (140 aa)) are allosteric domain. Positions 999-1154 (MKLPKANSGI…RDFVGEAATT (156 aa)) constitute an MGS-like domain.

The protein belongs to the CarB family. In terms of assembly, heterodimer composed of 2 chains; the small (or glutamine) chain promotes the hydrolysis of glutamine to ammonia, which is used by the large (or ammonia) chain to synthesize carbamoyl phosphate. The cofactor is Mg(2+). Mn(2+) serves as cofactor.

The protein resides in the mitochondrion. It carries out the reaction hydrogencarbonate + L-glutamine + 2 ATP + H2O = carbamoyl phosphate + L-glutamate + 2 ADP + phosphate + 2 H(+). It catalyses the reaction hydrogencarbonate + NH4(+) + 2 ATP = carbamoyl phosphate + 2 ADP + phosphate + 2 H(+). It participates in amino-acid biosynthesis; L-arginine biosynthesis; carbamoyl phosphate from bicarbonate: step 1/1. In terms of biological role, large subunit of the arginine-specific carbamoyl phosphate synthase (CPSase). CPSase catalyzes the formation of carbamoyl phosphate from the ammonia moiety of glutamine, hydrogencarbonate, and phosphate donated by ATP, constituting the first step of 2 biosynthetic pathways, one leading to arginine and/or urea and the other to pyrimidine nucleotides. The large subunit (synthetase) binds the substrates ammonia (free or transferred from glutamine from the small subunit), hydrogencarbonate and ATP and carries out an ATP-coupled ligase reaction, activating hydrogencarbonate by forming carboxy phosphate which reacts with ammonia to form carbamoyl phosphate. The protein is Carbamoyl phosphate synthase arginine-specific large chain (argA) of Cutaneotrichosporon cutaneum (Yeast).